Here is a 142-residue protein sequence, read N- to C-terminus: Large ribosomal subunit protein bL17 (142 aa).

It belongs to the bacterial ribosomal protein bL17 family. In terms of assembly, part of the 50S ribosomal subunit. Contacts protein L32.

In Wolbachia pipientis subsp. Culex pipiens (strain wPip), this protein is Large ribosomal subunit protein bL17.